The following is a 358-amino-acid chain: Peptide chain release factor 1 (358 aa).

Position 234 is an N5-methylglutamine (Gln-234).

It belongs to the prokaryotic/mitochondrial release factor family. In terms of processing, methylated by PrmC. Methylation increases the termination efficiency of RF1.

It localises to the cytoplasm. Functionally, peptide chain release factor 1 directs the termination of translation in response to the peptide chain termination codons UAG and UAA. The protein is Peptide chain release factor 1 of Chloroherpeton thalassium (strain ATCC 35110 / GB-78).